The chain runs to 230 residues: MAKRGKKYVEAAKLVDRASAYSATEAVELVKKTNTAKFDATVEAAFRLGVDPKKADQQIRGAVVLPHGTGKVQRVLVFAKGEKAKEAEAAGAEFVGDADYIGKIQKGWFDFDVVVATPDMMGEVGKLGRVLGPKGLMPNPKTGTVTFDVTKAVNEIKAGKVEYRVDKAGNIHVPIGKVSFEDAKLVENFKTIADTLQKAKPAAAKGTYMKNATVASTMGPGVRVDVSTLA.

Belongs to the universal ribosomal protein uL1 family. As to quaternary structure, part of the 50S ribosomal subunit.

Binds directly to 23S rRNA. The L1 stalk is quite mobile in the ribosome, and is involved in E site tRNA release. Functionally, protein L1 is also a translational repressor protein, it controls the translation of the L11 operon by binding to its mRNA. In Bacillus mycoides (strain KBAB4) (Bacillus weihenstephanensis), this protein is Large ribosomal subunit protein uL1.